The chain runs to 302 residues: Phosphoribosylaminoimidazole-succinocarboxamide synthase (302 aa).

This sequence belongs to the SAICAR synthetase family.

It catalyses the reaction 5-amino-1-(5-phospho-D-ribosyl)imidazole-4-carboxylate + L-aspartate + ATP = (2S)-2-[5-amino-1-(5-phospho-beta-D-ribosyl)imidazole-4-carboxamido]succinate + ADP + phosphate + 2 H(+). Its pathway is purine metabolism; IMP biosynthesis via de novo pathway; 5-amino-1-(5-phospho-D-ribosyl)imidazole-4-carboxamide from 5-amino-1-(5-phospho-D-ribosyl)imidazole-4-carboxylate: step 1/2. This is Phosphoribosylaminoimidazole-succinocarboxamide synthase from Cupriavidus metallidurans (strain ATCC 43123 / DSM 2839 / NBRC 102507 / CH34) (Ralstonia metallidurans).